Here is a 261-residue protein sequence, read N- to C-terminus: Rhomboid-type serine protease 2 (261 aa).

5 helical membrane-spanning segments follow: residues 17-37 (LTAG…VFPI), 58-78 (LYPL…SLFV), 94-114 (ITLN…GMLL), 116-136 (PNVY…YFAV), and 155-175 (LYIP…SSFV). The active-site Nucleophile is Ser-124. The active site involves His-177.

It belongs to the peptidase S54 family.

It is found in the golgi apparatus membrane. The protein resides in the golgi apparatus. It localises to the cis-Golgi network membrane. It catalyses the reaction Cleaves type-1 transmembrane domains using a catalytic dyad composed of serine and histidine that are contributed by different transmembrane domains.. In terms of biological role, probable rhomboid-type serine protease that catalyzes intramembrane proteolysis. The protein is Rhomboid-type serine protease 2 (RBD2) of Eremothecium gossypii (strain ATCC 10895 / CBS 109.51 / FGSC 9923 / NRRL Y-1056) (Yeast).